Consider the following 351-residue polypeptide: Hydroxymethylglutaryl-CoA synthase (351 aa).

Asp28 contacts (3S)-3-hydroxy-3-methylglutaryl-CoA. Residue Glu80 is the Proton donor/acceptor of the active site. (3S)-3-hydroxy-3-methylglutaryl-CoA-binding residues include Cys112 and Thr153. Catalysis depends on Cys112, which acts as the Acyl-thioester intermediate. CoA is bound at residue Arg199. Residues Thr201 and His234 each contribute to the (3S)-3-hydroxy-3-methylglutaryl-CoA site. His234 acts as the Proton donor/acceptor in catalysis. Lys239 contacts CoA. The (3S)-3-hydroxy-3-methylglutaryl-CoA site is built by Arg243, Asn266, and Ser296.

Belongs to the thiolase-like superfamily. Archaeal HMG-CoA synthase family. In terms of assembly, interacts with acetoacetyl-CoA thiolase that catalyzes the precedent step in the pathway and with a DUF35 protein. The acetoacetyl-CoA thiolase/HMG-CoA synthase complex channels the intermediate via a fused CoA-binding site, which allows for efficient coupling of the endergonic thiolase reaction with the exergonic HMGCS reaction.

It carries out the reaction acetoacetyl-CoA + acetyl-CoA + H2O = (3S)-3-hydroxy-3-methylglutaryl-CoA + CoA + H(+). It functions in the pathway metabolic intermediate biosynthesis; (R)-mevalonate biosynthesis; (R)-mevalonate from acetyl-CoA: step 2/3. In terms of biological role, catalyzes the condensation of acetyl-CoA with acetoacetyl-CoA to form 3-hydroxy-3-methylglutaryl-CoA (HMG-CoA). Functions in the mevalonate (MVA) pathway leading to isopentenyl diphosphate (IPP), a key precursor for the biosynthesis of isoprenoid compounds that are building blocks of archaeal membrane lipids. This Picrophilus torridus (strain ATCC 700027 / DSM 9790 / JCM 10055 / NBRC 100828 / KAW 2/3) protein is Hydroxymethylglutaryl-CoA synthase.